Consider the following 157-residue polypeptide: GDP-mannose mannosyl hydrolase (157 aa).

Residues 2–3, Phe8, and Arg36 contribute to the substrate site; that span reads FL. The Nudix hydrolase domain maps to 3–153; it reads LRQEDFAAVV…SRAYFSPDAP (151 aa). 3 residues coordinate Mg(2+): Gly49, Glu69, and Gln122. Residues 50 to 71 carry the Nudix box motif; that stretch reads GRVCKDETLEAAFARLTQAELG.

It belongs to the Nudix hydrolase family. Homodimer. Requires Mg(2+) as cofactor.

The enzyme catalyses GDP-alpha-D-mannose + H2O = D-mannose + GDP + H(+). Functionally, hydrolyzes GDP-mannose. The sequence is that of GDP-mannose mannosyl hydrolase from Salmonella typhi.